The chain runs to 221 residues: Putative 3-methyladenine DNA glycosylase (221 aa).

This sequence belongs to the DNA glycosylase MPG family.

This is Putative 3-methyladenine DNA glycosylase from Herpetosiphon aurantiacus (strain ATCC 23779 / DSM 785 / 114-95).